The primary structure comprises 303 residues: 2-dehydropantoate 2-reductase (303 aa).

NADP(+)-binding positions include 7 to 12 (GCGALG), asparagine 98, and alanine 122. A substrate-binding site is contributed by asparagine 98. Lysine 176 serves as the catalytic Proton donor. 4 residues coordinate substrate: asparagine 180, asparagine 184, asparagine 194, and serine 244. Glutamate 256 is a binding site for NADP(+).

Belongs to the ketopantoate reductase family. Monomer.

Its subcellular location is the cytoplasm. It catalyses the reaction (R)-pantoate + NADP(+) = 2-dehydropantoate + NADPH + H(+). It participates in cofactor biosynthesis; (R)-pantothenate biosynthesis; (R)-pantoate from 3-methyl-2-oxobutanoate: step 2/2. Its function is as follows. Catalyzes the NADPH-dependent reduction of ketopantoate into pantoic acid. In Salmonella typhi, this protein is 2-dehydropantoate 2-reductase (panE).